A 250-amino-acid chain; its full sequence is 3-deoxy-manno-octulosonate cytidylyltransferase (250 aa).

Belongs to the KdsB family.

The protein localises to the cytoplasm. It carries out the reaction 3-deoxy-alpha-D-manno-oct-2-ulosonate + CTP = CMP-3-deoxy-beta-D-manno-octulosonate + diphosphate. Its pathway is nucleotide-sugar biosynthesis; CMP-3-deoxy-D-manno-octulosonate biosynthesis; CMP-3-deoxy-D-manno-octulosonate from 3-deoxy-D-manno-octulosonate and CTP: step 1/1. It functions in the pathway bacterial outer membrane biogenesis; lipopolysaccharide biosynthesis. Functionally, activates KDO (a required 8-carbon sugar) for incorporation into bacterial lipopolysaccharide in Gram-negative bacteria. This Actinobacillus pleuropneumoniae serotype 7 (strain AP76) protein is 3-deoxy-manno-octulosonate cytidylyltransferase.